A 77-amino-acid chain; its full sequence is Conotoxin ArMSGL-0143 (77 aa).

Residues 1-22 (MSGLGIMLLTLLLLVFMETSHQ) form the signal peptide. The propeptide occupies 23-44 (DAGEKQATQRDAINVRRRRSLT). 3 disulfides stabilise this stretch: Cys51–Cys63, Cys55–Cys71, and Cys62–Cys75. Phe76 is modified (phenylalanine amide).

It belongs to the conotoxin O3 superfamily. As to expression, expressed by the venom duct.

It localises to the secreted. The sequence is that of Conotoxin ArMSGL-0143 from Conus arenatus (Sand-dusted cone).